Reading from the N-terminus, the 859-residue chain is Cadherin-related family member 1 (859 aa).

An N-terminal signal peptide occupies residues 1-21 (MRRGPRVALVLGLLRIYLAQA). Topologically, residues 22-701 (NFAPHFFDNG…LIQTKDNPMK (680 aa)) are extracellular. 6 Cadherin domains span residues 36–135 (NGNM…APRF), 136–247 (IQEP…APIF), 248–354 (VGTP…PPTF), 360–473 (PQNK…VPKF), 474–577 (TSHY…YPQF), and 569–691 (DVND…MAAF). N-linked (GlcNAc...) asparagine glycosylation is found at asparagine 58 and asparagine 89. N-linked (GlcNAc...) asparagine glycosylation occurs at asparagine 288. Residues 702–722 (AVGVLAGVMAIVVAITVLIST) form a helical membrane-spanning segment. At 723 to 859 (ATFWRNKKSN…KKSLDNKAYI (137 aa)) the chain is on the cytoplasmic side. A disordered region spans residues 793–838 (PALPPPPKMASSMVAQQTVPTVSGSLTPQPSPQLPTPKTLGGPVQS). A compositionally biased stretch (polar residues) spans 805-816 (MVAQQTVPTVSG).

In terms of assembly, interacts with PROM1. Undergoes proteolytic cleavage; produces a soluble 95 kDa N-terminal fragment and a 25 kDa cell-associated C-terminal fragment. In terms of tissue distribution, expressed in cone and rod photoreceptor cells (at protein level). Expressed in photoreceptor cells of the outer nuclear layer of the retina. Expressed in mitral and tufted cells in the olfactory bulb.

The protein resides in the cell membrane. Potential calcium-dependent cell-adhesion protein. May be required for the structural integrity of the outer segment (OS) of photoreceptor cells. The chain is Cadherin-related family member 1 (Cdhr1) from Mus musculus (Mouse).